An 86-amino-acid polypeptide reads, in one-letter code: Small ribosomal subunit protein bS20 (86 aa).

The disordered stretch occupies residues M1–K25.

Belongs to the bacterial ribosomal protein bS20 family.

In terms of biological role, binds directly to 16S ribosomal RNA. This Saccharopolyspora erythraea (strain ATCC 11635 / DSM 40517 / JCM 4748 / NBRC 13426 / NCIMB 8594 / NRRL 2338) protein is Small ribosomal subunit protein bS20.